A 338-amino-acid polypeptide reads, in one-letter code: Glyceraldehyde-3-phosphate dehydrogenase (338 aa).

NAD(+)-binding positions include 12 to 13 (RI), aspartate 34, and arginine 79. Residues 150–152 (SCT), threonine 181, 210–211 (TG), and arginine 233 each bind D-glyceraldehyde 3-phosphate. The active-site Nucleophile is cysteine 151. Residue asparagine 316 coordinates NAD(+).

It belongs to the glyceraldehyde-3-phosphate dehydrogenase family. In terms of assembly, homotetramer.

It localises to the cytoplasm. The enzyme catalyses D-glyceraldehyde 3-phosphate + phosphate + NAD(+) = (2R)-3-phospho-glyceroyl phosphate + NADH + H(+). The protein operates within carbohydrate degradation; glycolysis; pyruvate from D-glyceraldehyde 3-phosphate: step 1/5. This is Glyceraldehyde-3-phosphate dehydrogenase (GPD) from Yarrowia lipolytica (strain CLIB 122 / E 150) (Yeast).